Here is a 751-residue protein sequence, read N- to C-terminus: Nibrin (751 aa).

One can recognise an FHA domain in the interval 24 to 83 (YVVGRKNCGILIENDQSISRNHAVLTVNFPVTSLSQTDEIPTLTIKDNSKYGTFVNEEKM). BRCT domains are found at residues 105–181 (KFRV…SEFL) and 224–315 (GKTF…LAVI). The interval 111–328 (EPLVVCSSCL…TENYCNPQGQ (218 aa)) is mediates interaction with SP100. Residues 221–403 (IFKGKTFVFL…SRKLSQETFN (183 aa)) form an interaction with MTOR, MAPKAP1 and RICTOR region. Thr337 carries the post-translational modification Phosphothreonine. The residue at position 343 (Ser343) is a Phosphoserine; by ATM. A phosphoserine mark is found at Ser347 and Ser398. The interval 389 to 418 (GLEQSSRKLSQETFNIKEAPKPSSKANNVA) is disordered. A Phosphoserine; by CDK2 modification is found at Ser433. Lys436 is covalently cross-linked (Glycyl lysine isopeptide (Lys-Gly) (interchain with G-Cter in ubiquitin)). Disordered regions lie at residues 444–479 (KDWT…SSCK) and 491–550 (EQTQ…RKRK). Polar residues predominate over residues 446-457 (WTSQQQQNSIKN). Residues 461–467 (PCTRKRE) carry the Nuclear localization signal motif. Composition is skewed to basic and acidic residues over residues 502-518 (KSKE…READ) and 528-539 (ELNRKSPDRKPL). Ser508 bears the Phosphoserine mark. Residues Lys569 and Lys580 each participate in a glycyl lysine isopeptide (Lys-Gly) (interchain with G-Cter in SUMO2) cross-link. The interval 576–645 (VKVEKQEADD…ANSDGLQDSS (70 aa)) is disordered. Basic and acidic residues-rich tracts occupy residues 577–599 (KVEK…ERNR) and 615–636 (EDER…HEIA). Glycyl lysine isopeptide (Lys-Gly) (interchain with G-Cter in ubiquitin) cross-links involve residues Lys684, Lys688, and Lys733. The span at 731 to 742 (QAKEESLADDLF) shows a compositional bias: basic and acidic residues. Positions 731 to 751 (QAKEESLADDLFRYNPNVKRR) are disordered. The FxF/Y motif signature appears at 738–747 (ADDLFRYNPN).

This sequence belongs to the Nibrin family. As to quaternary structure, component of the MRN complex composed of two heterodimers RAD50 and MRE11 associated with a single NBN. The MRN complexes dimerize on DNA to form joined MRN-MRN oligomers required for DNA double-strand break repair. As part of the MRN complex, interacts with MCM9; the interaction recruits the complex to DNA repair sites. Component of the BASC complex, at least composed of BRCA1, MSH2, MSH6, MLH1, ATM, BLM, RAD50, MRE11 and NBN. Interacts with histone H2AX; this requires phosphorylation of H2AX on 'Ser-139' and promotes NBN recruitment to DNA damage sites. Interacts with (phosphorylated) MDC1; promoting NBN recruitment to DNA damage sites. Interacts with (phosphorylated) RAD17; promoting NBN recruitment to DNA damage sites. Interacts (via FxF/Y motif) with ATM. Interacts with HJURP. Interacts with INTS3. Interacts with KPNA2. Interacts with TERF2; interaction is disrupted upon NBN phosphorylation by CDK2. Interacts with (phosphorylated) RBBP8/CtIP; the interaction links the role of the MRN complex in DNA double-strand break sensing to resection. Interacts with SP100; recruits NBN to PML bodies. Interacts with ATF2. Interacts with MTOR, MAPKAP1 isoform 2 and RICTOR; indicative for an association with the mTORC2 complex. Interacts with MRNIP. Interacts with UFL1; promoting UFL1 recruitment to double-strand breaks following DNA damage. Interacts with CYREN (via XLF motif). In terms of processing, ubiquitinated at Lys-436 via 'Lys-6'-linked ubiquitin chains by RNF8, promoting NBN recruitment to DNA double-strand breaks (DSBs). Ubiquitinated at Lys-684 and Lys-688 via 'Lys-63'-linked ubiquitin chains by PELI1: ubiquitination takes place following PELI1 phosphorylation and promotes ATM activation and DNA repair. Ubiquitinated at Lys-733 via 'Lys-63'-linked ubiquitin chains by the SCF(SKP2) complex: ubiquitination takes place following SKP2 phosphorylation and promotes ATM activation and DNA repair. Phosphorylated by ATM in response of ionizing radiation, and such phosphorylation is responsible intra-S phase checkpoint control and telomere maintenance. Phosphorylated at Ser-433 by CDK2 in S/G2 phases abolishes interaction with TERF2, enabling DCLRE1B/Apollo recruitment to telomeres. Phosphorylation at Ser-433 in response to dysfunctional telomeres promotes non-homologous end joining repair at telomeres, while dephosphorylation by PPP1CA promotes microhomology-mediated end-joining (MMEJ) repair. As to expression, high expression in the liver, heart and testis. Low expression in all other tissues analyzed. In the cerebellum the postmitotic Purkinje cells are marked specifically.

The protein localises to the nucleus. Its subcellular location is the chromosome. It localises to the PML body. It is found in the telomere. Component of the MRN complex, which plays a central role in double-strand break (DSB) repair, DNA recombination, maintenance of telomere integrity and meiosis. The MRN complex is involved in the repair of DNA double-strand breaks (DSBs) via homologous recombination (HR), an error-free mechanism which primarily occurs during S and G2 phases. The complex (1) mediates the end resection of damaged DNA, which generates proper single-stranded DNA, a key initial steps in HR, and is (2) required for the recruitment of other repair factors and efficient activation of ATM and ATR upon DNA damage. The MRN complex possesses single-strand endonuclease activity and double-strand-specific 3'-5' exonuclease activity, which are provided by MRE11, to initiate end resection, which is required for single-strand invasion and recombination. Within the MRN complex, NBN acts as a protein-protein adapter, which specifically recognizes and binds phosphorylated proteins, promoting their recruitment to DNA damage sites. Recruits MRE11 and RAD50 components of the MRN complex to DSBs in response to DNA damage. Promotes the recruitment of PI3/PI4-kinase family members ATM, ATR, and probably DNA-PKcs to the DNA damage sites, activating their functions. Mediates the recruitment of phosphorylated RBBP8/CtIP to DSBs, leading to cooperation between the MRN complex and RBBP8/CtIP to initiate end resection. RBBP8/CtIP specifically promotes the endonuclease activity of the MRN complex to clear DNA ends containing protein adducts. The MRN complex is also required for the processing of R-loops. NBN also functions in telomere length maintenance via its interaction with TERF2: interaction with TERF2 during G1 phase preventing recruitment of DCLRE1B/Apollo to telomeres. NBN also promotes DNA repair choice at dysfunctional telomeres: NBN phosphorylation by CDK2 promotes non-homologous end joining repair at telomeres, while unphosphorylated NBN promotes microhomology-mediated end-joining (MMEJ) repair. Enhances AKT1 phosphorylation possibly by association with the mTORC2 complex. This chain is Nibrin, found in Mus musculus (Mouse).